Reading from the N-terminus, the 416-residue chain is CinA-like protein (416 aa).

This sequence belongs to the CinA family.

The sequence is that of CinA-like protein from Rippkaea orientalis (strain PCC 8801 / RF-1) (Cyanothece sp. (strain PCC 8801)).